The chain runs to 136 residues: MRDHLPPGLPPDPFADDPCDPSAALEAVEPGQPLDQQERMAVEADLADLAVYEALLAHKGIRGLVVCCDECQQDHYHDWDMLRSNLLQLLIDGTVRPHEPAYDPEPDSYVTWDYCRGYADASLNEAAPDADRFRRR.

The interval 1-33 (MRDHLPPGLPPDPFADDPCDPSAALEAVEPGQP) is disordered.

It to M.leprae ML0386.

This is an uncharacterized protein from Mycobacterium tuberculosis (strain CDC 1551 / Oshkosh).